Reading from the N-terminus, the 149-residue chain is Chromophore lyase CpcS/CpeS homolog (149 aa).

It belongs to the CpcS/CpeS biliprotein lyase family.

The protein resides in the plastid. The protein localises to the chloroplast. Its function is as follows. Might function to covalently attach a chromophore to Cys residue(s) of phycobiliproteins. The polypeptide is Chromophore lyase CpcS/CpeS homolog (Porphyra purpurea (Red seaweed)).